We begin with the raw amino-acid sequence, 75 residues long: MMKLTCVLIIAVLFLTACQLTTAETRDEYRAVRSSDEVRNSRSTRDCSGSGYGCKNTPCCDGLTCRGPHQGPICL.

The N-terminal stretch at 1-23 is a signal peptide; that stretch reads MMKLTCVLIIAVLFLTACQLTTA. A propeptide spanning residues 24–45 is cleaved from the precursor; it reads ETRDEYRAVRSSDEVRNSRSTR. The segment covering 31 to 45 has biased composition (basic and acidic residues); it reads AVRSSDEVRNSRSTR. The interval 31–50 is disordered; it reads AVRSSDEVRNSRSTRDCSGS. Intrachain disulfides connect Cys47/Cys60, Cys54/Cys65, and Cys59/Cys74.

It belongs to the conotoxin O1 superfamily. In terms of tissue distribution, expressed by the venom duct.

It is found in the secreted. The chain is Conotoxin VnMKLT2-012 from Conus ventricosus (Mediterranean cone).